Reading from the N-terminus, the 286-residue chain is ATP synthase gamma chain (286 aa).

It belongs to the ATPase gamma chain family. As to quaternary structure, F-type ATPases have 2 components, CF(1) - the catalytic core - and CF(0) - the membrane proton channel. CF(1) has five subunits: alpha(3), beta(3), gamma(1), delta(1), epsilon(1). CF(0) has three main subunits: a, b and c.

It is found in the cell inner membrane. Functionally, produces ATP from ADP in the presence of a proton gradient across the membrane. The gamma chain is believed to be important in regulating ATPase activity and the flow of protons through the CF(0) complex. This is ATP synthase gamma chain from Flavobacterium psychrophilum (strain ATCC 49511 / DSM 21280 / CIP 103535 / JIP02/86).